A 478-amino-acid polypeptide reads, in one-letter code: Protein nucleotidyltransferase YdiU (478 aa).

Positions 84, 86, 87, 107, 119, 120, 170, and 177 each coordinate ATP. Asp246 (proton acceptor) is an active-site residue. Residues Asn247 and Asp256 each coordinate Mg(2+). Asp256 contacts ATP.

It belongs to the SELO family. Mg(2+) serves as cofactor. It depends on Mn(2+) as a cofactor.

The catalysed reaction is L-seryl-[protein] + ATP = 3-O-(5'-adenylyl)-L-seryl-[protein] + diphosphate. It carries out the reaction L-threonyl-[protein] + ATP = 3-O-(5'-adenylyl)-L-threonyl-[protein] + diphosphate. It catalyses the reaction L-tyrosyl-[protein] + ATP = O-(5'-adenylyl)-L-tyrosyl-[protein] + diphosphate. The enzyme catalyses L-histidyl-[protein] + UTP = N(tele)-(5'-uridylyl)-L-histidyl-[protein] + diphosphate. The catalysed reaction is L-seryl-[protein] + UTP = O-(5'-uridylyl)-L-seryl-[protein] + diphosphate. It carries out the reaction L-tyrosyl-[protein] + UTP = O-(5'-uridylyl)-L-tyrosyl-[protein] + diphosphate. Its function is as follows. Nucleotidyltransferase involved in the post-translational modification of proteins. It can catalyze the addition of adenosine monophosphate (AMP) or uridine monophosphate (UMP) to a protein, resulting in modifications known as AMPylation and UMPylation. The protein is Protein nucleotidyltransferase YdiU of Shigella boydii serotype 4 (strain Sb227).